A 65-amino-acid chain; its full sequence is Large ribosomal subunit protein bL35 (65 aa).

The protein belongs to the bacterial ribosomal protein bL35 family.

This chain is Large ribosomal subunit protein bL35, found in Burkholderia ambifaria (strain MC40-6).